We begin with the raw amino-acid sequence, 427 residues long: Glucose-6-phosphate isomerase (427 aa).

Glutamate 277 acts as the Proton donor in catalysis. Active-site residues include histidine 298 and lysine 414.

This sequence belongs to the GPI family.

It is found in the cytoplasm. The enzyme catalyses alpha-D-glucose 6-phosphate = beta-D-fructose 6-phosphate. It functions in the pathway carbohydrate biosynthesis; gluconeogenesis. It participates in carbohydrate degradation; glycolysis; D-glyceraldehyde 3-phosphate and glycerone phosphate from D-glucose: step 2/4. Its function is as follows. Catalyzes the reversible isomerization of glucose-6-phosphate to fructose-6-phosphate. The protein is Glucose-6-phosphate isomerase of Mycoplasma capricolum subsp. capricolum (strain California kid / ATCC 27343 / NCTC 10154).